A 499-amino-acid chain; its full sequence is Ribose import ATP-binding protein RbsA (499 aa).

ABC transporter domains are found at residues 3–240 (VEMS…VGRE) and 250–494 (LEPG…TGGD). An ATP-binding site is contributed by 35–42 (GENGAGKS).

This sequence belongs to the ABC transporter superfamily. Ribose importer (TC 3.A.1.2.1) family. In terms of assembly, the complex is composed of an ATP-binding protein (RbsA), two transmembrane proteins (RbsC) and a solute-binding protein (RbsB).

The protein resides in the cell membrane. The enzyme catalyses D-ribose(out) + ATP + H2O = D-ribose(in) + ADP + phosphate + H(+). In terms of biological role, part of the ABC transporter complex RbsABC involved in ribose import. Responsible for energy coupling to the transport system. The protein is Ribose import ATP-binding protein RbsA of Shouchella clausii (strain KSM-K16) (Alkalihalobacillus clausii).